The chain runs to 398 residues: Phospholipase C (398 aa).

Positions 1–26 (MKALKKVSNILCVLGLCTLMGGTSYA) are cleaved as a signal peptide. Residues W27, H37, D82, H94, H152, D156, H162, H174, and E178 each coordinate Zn(2+). The region spanning 27–276 (WDGKKDGTGT…NEVSNGNTGD (250 aa)) is the Zn-dependent PLC domain. The segment at 273–281 (NTGDNDSLT) is linker. A PLAT domain is found at 282-398 (NEFNIVLKTA…TGNETYYINK (117 aa)). Positions 297, 298, 299, 319, 320, 322, 323, 324, and 363 each coordinate Ca(2+).

The protein belongs to the bacterial zinc-metallophospholipase C family. Requires Ca(2+) as cofactor. Zn(2+) is required as a cofactor.

It localises to the secreted. It carries out the reaction a 1,2-diacyl-sn-glycero-3-phosphocholine + H2O = phosphocholine + a 1,2-diacyl-sn-glycerol + H(+). Functionally, bacterial hemolysins are exotoxins that attack blood cell membranes and cause cell rupture. Binds to eukaryotic membranes where it hydrolyzes phosphatidylcholine. This enzyme has 10-fold less activity towards sphingomyelin than its C.perfringens counterpart, is approximately 100-fold less hemolytic against mouse erythrocytes and at least 100-fold less toxic in mice. In Paraclostridium bifermentans (Clostridium bifermentans), this protein is Phospholipase C (plc).